Reading from the N-terminus, the 1371-residue chain is MMEEYQEINKILHEIDDGNTKRKVQLVKNKKDGKLYVCKTIDFNNNNETKDSKVKREREYLFLKQYSSPSFSHLNIAKYIKHFETRDNHGYLQKLTIIIEYYEGGDLTNLKNLNEVLPKDIIYLFFTMLVILKEFKNSIIHRDIKPENIFFVKNGPDLEFYLGDMGSSSMVITDQKNTLIGTNQYMAPEIDLGGYTCKVDIYSLGKTMLSLITLVHSPMNSIFESLFQLCTLENFKIRPSIDQLIEFVCRQYDQSRYTISLSSYTHPNTRSIIKYFKDKKFNILKEGEKINFKIDIQSKFYNCISVYRGFAYNEYIVEEEEKEKEEYQKEENQQSIPNVLSIVELIQPPLQDLSKDFENVLINHINYIRDGGINGSIRSLLHPDIIIKTKCDRVKGFEIKAHSNITNTEGLFIENAHLIYKPVNLSWKKIFLEREDEITPDVQLKAVFLSLLVAFKISNDENDFLTGTLFDKLMEHIYFVKSPSLPPPSQISPIKEPLSSYELKISFPFNHRAHIYGVKVPLNPNYLNLFFGGEIKDTLISNLIQTLNILAPNNLQYKSILIKLISIILKEEKRILKSYSNLGLEIYFKEFNEIIKNEIALEGIVSDKLLVSKIDTTKKIEKIRGFRNGHSNSDADIYISEFKGKYYAIDKFEHIPGLFEILEPFSNKAIDDFNQHFKFISTFVDVNESFGLVYTIFELPSSLINSYQTTRKSCENKNILDKDKTFRNLLNQHLSYYQNIQNNRYKLNGTDLTSKKLSFTEYQYNIIISNDCDIHYYFSFVGKNGSGLVQSFFDIGAWVYGDENVKKIKVLSFFYLLQCLFDYQTKNTHNSVDIDFPNILYYLKKFYYSSLVDYGLNGMDSSSKIFNYDLNNSYSFIKIGFLIYNILDLYKPNIIPDQTLYYDSDLIVMLLENSSNKFLCFRKQYYSDLDKTKLKLTPENIVPQNNDNDNSIILLPLLIIKDDITSFHFFDYNLKDSIKTIEDFNNEKECLLYYLQNIQKNPSNANSLVLINLNLFEENESTDNESFLFFDIFYLIKQLHGLSTIIDSWDNFISSLSKPISLVSNYIQTNLKKILDDPLSIDILYNDESMSHFKPFIYDKIKEIKKNVWLIRDKNNNNYIRKLSGYIKSKFKEVEKYGFEFIDDVSISNPYLKIAVENGWPISFLSSHFKRDNSNLFDYLFNKELIILELLKEKGVDGISQLESYFVENNIIYILTKYHGDYSNLEEINELNQEDLFEILVQMSDKLKILESLQIYHRDIKPENILFKREIVNGNIQSKVCLIDFSISDFGFILKTNESGSKMYQAPEIYQEEYRSKENDITNQHYKLDIYSLGFTLSHLMKKFNCNPPSLVQIVKKMIKHKAFLLKQPTL.

Protein kinase domains are found at residues 9–269 (NKIL…HPNT) and 1131–1371 (FKEV…QPTL). ATP contacts are provided by residues 15 to 23 (IDDGNTKRK) and Lys-39. Residue Asp-143 is the Proton acceptor of the active site.

Belongs to the protein kinase superfamily. Ser/Thr protein kinase family.

The catalysed reaction is L-seryl-[protein] + ATP = O-phospho-L-seryl-[protein] + ADP + H(+). It catalyses the reaction L-threonyl-[protein] + ATP = O-phospho-L-threonyl-[protein] + ADP + H(+). In Dictyostelium discoideum (Social amoeba), this protein is Probable serine/threonine-protein kinase DDB_G0293292.